Consider the following 482-residue polypeptide: Programmed cell death protein 7 (482 aa).

2 disordered regions span residues Met1–Ala136 and Gly151–Leu170. Over residues Gly13 to Phe48 the composition is skewed to pro residues. Residues Pro49–Ser71 are compositionally biased toward low complexity. Pro residues-rich tracts occupy residues Pro82–Gly100 and Pro109–Asp130. Low complexity predominate over residues Gly151–Pro168. Residues Glu233–Leu408 are a coiled coil.

Interacts with RBM40. Component of the U11/U12 snRNPs that are part of the U12-type spliceosome. In terms of tissue distribution, highly expressed in testis, thymus and lymph nodes. Detected at low levels in embryonic stem cells.

It is found in the nucleus. In terms of biological role, promotes apoptosis when overexpressed. The polypeptide is Programmed cell death protein 7 (Pdcd7) (Mus musculus (Mouse)).